The following is a 148-amino-acid chain: Holo-[acyl-carrier-protein] synthase (148 aa).

Mg(2+)-binding residues include Asp9 and Glu63.

The protein belongs to the P-Pant transferase superfamily. AcpS family. The cofactor is Mg(2+).

It localises to the cytoplasm. It catalyses the reaction apo-[ACP] + CoA = holo-[ACP] + adenosine 3',5'-bisphosphate + H(+). Transfers the 4'-phosphopantetheine moiety from coenzyme A to a Ser of acyl-carrier-protein. The polypeptide is Holo-[acyl-carrier-protein] synthase (Burkholderia cenocepacia (strain HI2424)).